The primary structure comprises 297 residues: Bifunctional protein FolD (297 aa).

NADP(+) is bound by residues 169 to 171 (GRS), S196, and I237.

The protein belongs to the tetrahydrofolate dehydrogenase/cyclohydrolase family. As to quaternary structure, homodimer.

The enzyme catalyses (6R)-5,10-methylene-5,6,7,8-tetrahydrofolate + NADP(+) = (6R)-5,10-methenyltetrahydrofolate + NADPH. It catalyses the reaction (6R)-5,10-methenyltetrahydrofolate + H2O = (6R)-10-formyltetrahydrofolate + H(+). Its pathway is one-carbon metabolism; tetrahydrofolate interconversion. Its function is as follows. Catalyzes the oxidation of 5,10-methylenetetrahydrofolate to 5,10-methenyltetrahydrofolate and then the hydrolysis of 5,10-methenyltetrahydrofolate to 10-formyltetrahydrofolate. The sequence is that of Bifunctional protein FolD from Salinibacter ruber (strain DSM 13855 / M31).